Here is a 485-residue protein sequence, read N- to C-terminus: Probable cytosol aminopeptidase (485 aa).

Residues Lys251 and Asp256 each contribute to the Mn(2+) site. Lys263 is an active-site residue. Mn(2+)-binding residues include Asp274, Asp333, and Glu335. Residue Arg337 is part of the active site.

Belongs to the peptidase M17 family. Mn(2+) serves as cofactor.

It localises to the cytoplasm. It carries out the reaction Release of an N-terminal amino acid, Xaa-|-Yaa-, in which Xaa is preferably Leu, but may be other amino acids including Pro although not Arg or Lys, and Yaa may be Pro. Amino acid amides and methyl esters are also readily hydrolyzed, but rates on arylamides are exceedingly low.. The enzyme catalyses Release of an N-terminal amino acid, preferentially leucine, but not glutamic or aspartic acids.. Its function is as follows. Presumably involved in the processing and regular turnover of intracellular proteins. Catalyzes the removal of unsubstituted N-terminal amino acids from various peptides. The sequence is that of Probable cytosol aminopeptidase from Brucella melitensis biotype 1 (strain ATCC 23456 / CCUG 17765 / NCTC 10094 / 16M).